Reading from the N-terminus, the 282-residue chain is Acetylglutamate kinase (282 aa).

Substrate contacts are provided by residues 62–63 (GG), arginine 84, and asparagine 178.

Belongs to the acetylglutamate kinase family. ArgB subfamily.

Its subcellular location is the cytoplasm. It carries out the reaction N-acetyl-L-glutamate + ATP = N-acetyl-L-glutamyl 5-phosphate + ADP. The protein operates within amino-acid biosynthesis; L-arginine biosynthesis; N(2)-acetyl-L-ornithine from L-glutamate: step 2/4. Its function is as follows. Catalyzes the ATP-dependent phosphorylation of N-acetyl-L-glutamate. The sequence is that of Acetylglutamate kinase from Thermotoga petrophila (strain ATCC BAA-488 / DSM 13995 / JCM 10881 / RKU-1).